Reading from the N-terminus, the 1210-residue chain is MSYEDYQYNETLTQEDCWTVISSFFEETSLARQQLFSFDEFVQNTMQEIVDDDSTLTLDQYAQHTGAQGDVTRRYEINFGQIYLSRPTMTEADGSTTTMFPQEARLRNLTYSSPLYVDMRKKVMVAADSNVPIGEEEWLVEEEDEEPSKVFIGKIPIMLRSTFCILNGVSDSELYDLNECPYDQGGYFIINGSEKVIIAQERSAANIVQVFKKAAPSPIAYVAEIRSALERGSRLISSMQIKLMARNTENSGQTIRATLPYIRSDIPIVIVFRALGVVPDRDILEHICYDPNDFQMLEMMKPCIEEAFVIQDKDIALDYIGKRGSTTGVTREKRLRYAHDILQKELLPHITTMEGFETRKAFFLGYMIHRMLLCALERREPDDRDHFGKKRLDLAGPLLASLFRMLFRKMTRDVYKYMQKCVETNREFNLTLAVKSNIITNGLRYSLATGNWGDQKRSMVNRVGVSQVLNRYTFASTLSHLRRTNTPIGRDGKLAKPRQLHNTHWGMVCPAETPEGQACGLVKNLSLMSYVSVGSPSAPIIEFLEEWGLETLEDYNPSASPNATKVFVNGVWLGVHRDPAHLTETLRSLRRRLDISAEVSIVRDIREKELRLFTDAGRICRPLFIVDNNPNSERRGELCIRKEHIQQLIEDKDRYDIDPEQRFGWTALVSSGLIEYLDAEEEETVMIAMSPEDLEASRQMQAGYEVKEELDPAQRVKPAPNPHVHAWTHCEIHPAMILGILASIIPFPDHNQSPRNTYQSAMGKQAMGVYLTNYQVRMDTMANILYYPQKPLATTRSMEYLKFRELPAGQNAIVAILCYSGYNQEDSIIMNQASIDRGLFRSIFYRTYTDQEKKIGMTVMEEFERPVRSTTLRMKHGTYDKLEDDGLIAPGTRVSGEDIIIGKTAPIPLDHEELGQRTQLHAKRDVSTPLRSTESGIVDQVMVTTNQEGLKFVKVRMRSTRIPQIGDKFASRHGQKGTIGMTYRHEDMPFSAQGIVPDIIINPHAIPSRMTVAHLVECQLSKVSALSGFEGDATPFTDVTVEAVSKLLRSHGFQSRGFEVMYHGHTGRKLVAQVFLGPTYYQRLKHLVDDKIHARARGPVQILTRQPVEGRSRDGGLRFGEMERDCQISHGCSSVLRERLFDCSDAYRVIVCDICGLIAIASYKKDSYECRSCQNRTRFSQVYLPYAAKLLFQELMSMNIAPRLFTKNHK.

Position 826 (D826) interacts with Mg(2+). Zn(2+)-binding residues include C1152, C1155, C1170, and C1173. The C4-type zinc finger occupies 1152–1173 (CDICGLIAIASYKKDSYECRSC).

This sequence belongs to the RNA polymerase beta chain family. As to quaternary structure, component of the RNA polymerase II (Pol II) complex consisting of 12 subunits.

It localises to the nucleus. The enzyme catalyses RNA(n) + a ribonucleoside 5'-triphosphate = RNA(n+1) + diphosphate. In terms of biological role, DNA-dependent RNA polymerase catalyzes the transcription of DNA into RNA using the four ribonucleoside triphosphates as substrates. Second largest component of RNA polymerase II which synthesizes mRNA precursors and many functional non-coding RNAs. Proposed to contribute to the polymerase catalytic activity and forms the polymerase active center together with the largest subunit. Pol II is the central component of the basal RNA polymerase II transcription machinery. It is composed of mobile elements that move relative to each other. RPB2 is part of the core element with the central large cleft, the clamp element that moves to open and close the cleft and the jaws that are thought to grab the incoming DNA template. The protein is DNA-directed RNA polymerase II subunit RPB2 (rpb2) of Schizosaccharomyces pombe (strain 972 / ATCC 24843) (Fission yeast).